A 322-amino-acid chain; its full sequence is Cysteine protease yopT1 (322 aa).

Positions 42–69 are disordered; it reads LSHSNRQKKLSATIKHNQSSRSMLDRKL. Catalysis depends on residues cysteine 139, histidine 258, and aspartate 274.

This sequence belongs to the peptidase C58 family. Interacts with human ARHA.

The protein resides in the secreted. Functionally, cysteine protease, which is translocated into infected cells and plays a central role in pathogenesis by cleaving the C-terminus end of the human small GTPase RhoA/ARHA, a regulator of cytoskeleton. Once cleaved, ARHA loses its lipid modification, and is released from the cell membrane, leading to the subsequent disruption of actin cytoskeleton of the host cell. This chain is Cysteine protease yopT1 (yopT1), found in Yersinia enterocolitica serotype O:8 / biotype 1B (strain NCTC 13174 / 8081).